The primary structure comprises 342 residues: Ribosomal RNA small subunit methyltransferase C (342 aa).

Belongs to the methyltransferase superfamily. RsmC family. Monomer.

It is found in the cytoplasm. It catalyses the reaction guanosine(1207) in 16S rRNA + S-adenosyl-L-methionine = N(2)-methylguanosine(1207) in 16S rRNA + S-adenosyl-L-homocysteine + H(+). In terms of biological role, specifically methylates the guanine in position 1207 of 16S rRNA in the 30S particle. This Salmonella paratyphi B (strain ATCC BAA-1250 / SPB7) protein is Ribosomal RNA small subunit methyltransferase C.